Consider the following 855-residue polypeptide: Inactive rhomboid protein 1 (855 aa).

The tract at residues 1 to 35 (MSEARRDSTSSLQRKKPPWLKLDIPSAAPATAEEP) is disordered. Over 1–411 (MSEARRDSTS…HRPFFTYWLT (411 aa)) the chain is Cytoplasmic. The segment covering 25–35 (PSAAPATAEEP) has biased composition (low complexity). 2 positions are modified to phosphoserine: Ser76 and Ser176. Phosphothreonine occurs at positions 180 and 183. Ser390 is modified (phosphoserine). Residues 412-432 (FVHSLVTILAVCIYGIAPVGF) traverse the membrane as a helical segment. Over 433–655 (SQHETVDSVL…NPEVPDQFYR (223 aa)) the chain is Lumenal. Residue Asn583 is glycosylated (N-linked (GlcNAc...) asparagine). Residues 656-676 (LWLSLFLHAGILHCLVSICFQ) traverse the membrane as a helical segment. The Cytoplasmic portion of the chain corresponds to 677–691 (MTVLRDLEKLAGWHR). Residues 692-712 (IAIIYLLSGVTGNLASAIFLP) traverse the membrane as a helical segment. Topologically, residues 713 to 714 (YR) are lumenal. The helical transmembrane segment at 715-735 (AEVGPAGSQFGILACLFVELF) threads the bilayer. Residues 736-746 (QSWQILARPWR) are Cytoplasmic-facing. A helical transmembrane segment spans residues 747–767 (AFFKLLAVVLFLFTFGLLPWI). Over 768 to 772 (DNFAH) the chain is Lumenal. The helical transmembrane segment at 773–793 (ISGFISGLFLSFAFLPYISFG) threads the bilayer. At 794 to 803 (KFDLYRKRCQ) the chain is on the cytoplasmic side. Residues 804–824 (IIVFQVVFLGLLAGLVVLFYV) form a helical membrane-spanning segment. Residues 825–855 (YPVRCEWCEFLTCIPFTDKFCEKYELDAQLH) lie on the Lumenal side of the membrane.

The protein belongs to the peptidase S54 family. As to quaternary structure, homodimer, or homooligomer. Interacts with TGFA and HBEGF. Interacts with EGF; may retain EGF in the endoplasmic reticulum and regulates its degradation through the endoplasmic reticulum-associated degradation (ERAD). Interacts (via cytoplasmic N-terminus) with FRMD8/iTAP; this interaction leads to mutual protein stabilization. Interacts with ADAM17/TACE.

It is found in the endoplasmic reticulum membrane. The protein resides in the golgi apparatus membrane. In terms of biological role, regulates ADAM17 protease, a sheddase of the epidermal growth factor (EGF) receptor ligands and TNF, thereby plays a role in sleep, cell survival, proliferation, migration and inflammation. Does not exhibit any protease activity on its own. The protein is Inactive rhomboid protein 1 (RHBDF1) of Callithrix jacchus (White-tufted-ear marmoset).